Here is a 251-residue protein sequence, read N- to C-terminus: L-ascorbate peroxidase 2, cytosolic (251 aa).

Catalysis depends on histidine 43, which acts as the Proton acceptor. Residue histidine 163 participates in heme b binding. Residues threonine 164, threonine 180, asparagine 182, isoleucine 185, and aspartate 187 each contribute to the K(+) site.

This sequence belongs to the peroxidase family. Ascorbate peroxidase subfamily. Heme b is required as a cofactor. As to expression, detected in bundle sheath cells, the photosynthetic cells that surround the phloem and xylem.

Its subcellular location is the cytoplasm. The enzyme catalyses L-ascorbate + H2O2 = L-dehydroascorbate + 2 H2O. In terms of biological role, plays a key role in hydrogen peroxide removal. The chain is L-ascorbate peroxidase 2, cytosolic from Arabidopsis thaliana (Mouse-ear cress).